Here is a 652-residue protein sequence, read N- to C-terminus: Adhesion G protein-coupled receptor E3 (652 aa).

The N-terminal stretch at 1 to 21 (MQGPLLLPGLCFLLSLFGAVT) is a signal peptide. The Extracellular portion of the chain corresponds to 22–357 (QKTKTSCAKC…TSQEEDPVLT (336 aa)). The EGF-like 1 domain maps to 24–66 (TKTSCAKCPPNASCVNNTHCTCNHGYTSGSGQKLFTFPLETCN). Disulfide bonds link cysteine 28–cysteine 37, cysteine 31–cysteine 43, cysteine 45–cysteine 65, cysteine 71–cysteine 85, cysteine 79–cysteine 94, and cysteine 96–cysteine 117. 2 N-linked (GlcNAc...) asparagine glycosylation sites follow: asparagine 34 and asparagine 39. The region spanning 67 to 118 (DINECTPPYSVYCGFNAVCYNVEGSFYCQCVPGYRLHSGNEQFSNSNENTCQ) is the EGF-like 2; calcium-binding domain. Asparagine 145, asparagine 189, asparagine 202, asparagine 250, asparagine 279, asparagine 327, and asparagine 334 each carry an N-linked (GlcNAc...) asparagine glycan. Residues 183–351 (KVLKIQNDSV…AVLMALTSQE (169 aa)) enclose the GAIN-B domain. 2 cysteine pairs are disulfide-bonded: cysteine 304–cysteine 333 and cysteine 321–cysteine 335. The segment at 304–351 (CVYWKSTGQGSQWSRDGCFLIHVNKSHTMCNCSHLSSFAVLMALTSQE) is GPS. A helical transmembrane segment spans residues 358–378 (VITYVGLSVSLLCLLLAALTF). Residues 379–389 (LLCKAIRNTST) lie on the Cytoplasmic side of the membrane. The helical transmembrane segment at 390-410 (SLHLQLSLCLFLAHLLFLVGI) threads the bilayer. Topologically, residues 411 to 416 (DRTEPK) are extracellular. The chain crosses the membrane as a helical span at residues 417–437 (VLCSIIAGALHYLYLAAFTWM). Over 438 to 464 (LLEGVHLFLTARNLTVVNYSSINRLMK) the chain is Cytoplasmic. The chain crosses the membrane as a helical span at residues 465–485 (WIMFPVGYGVPAVTVAISAAS). Topologically, residues 486-508 (WPHLYGTADRCWLHLDQGFMWSF) are extracellular. The chain crosses the membrane as a helical span at residues 509 to 529 (LGPVCAIFSANLVLFILVFWI). Residues 530–557 (LKRKLSSLNSEVSTIQNTRMLAFKATAQ) are Cytoplasmic-facing. A helical transmembrane segment spans residues 558–578 (LFILGCTWCLGLLQVGPAAQV). The Extracellular segment spans residues 579–580 (MA). The helical transmembrane segment at 581-601 (YLFTIINSLQGFFIFLVYCLL) threads the bilayer. At 602-652 (SQQVQKQYQKWFREIVKSKSESETYTLSSKMGPDSKPSEGDVFPGQVKRKY) the chain is on the cytoplasmic side. The segment at 621 to 652 (SESETYTLSSKMGPDSKPSEGDVFPGQVKRKY) is disordered.

The protein belongs to the G-protein coupled receptor 2 family. Adhesion G-protein coupled receptor (ADGR) subfamily. As to quaternary structure, forms a heterodimer, consisting of a large extracellular region (alpha subunit) non-covalently linked to a seven-transmembrane moiety (beta subunit). In terms of processing, proteolytically cleaved into 2 subunits, an extracellular alpha subunit and a seven-transmembrane subunit. In terms of tissue distribution, displays a predominantly leukocyte-restricted expression, with highest levels in neutrophils, monocytes and macrophages.

The protein resides in the cell membrane. The protein localises to the secreted. Orphan receptor that may play a role myeloid-myeloid interactions during immune and inflammatory responses. A ligand for the soluble form of this receptor is present at the surface of monocytes-derived macrophages and activated neutrophils. This chain is Adhesion G protein-coupled receptor E3, found in Homo sapiens (Human).